Reading from the N-terminus, the 52-residue chain is Lantibiotic epidermin (52 aa).

The propeptide occupies 1-30 (MEAVKEKNDLFNLDVKVNAKESNDSGAEPR). Positions 33–37 (SKFIC) form a cross-link, lanthionine (Ser-Cys). Positions 38–41 (TPGC) form a cross-link, beta-methyllanthionine (Thr-Cys). (Z)-2,3-didehydrobutyrine is present on T44. Positions 46–51 (SFNSYC) form a cross-link, lanthionine (Ser-Cys). The segment at residues 49–52 (SYCC) is a cross-link (S-(2-aminovinyl)-D-cysteine (Ser-Cys)).

The protein belongs to the type A lantibiotic family. In terms of processing, maturation of lantibiotics involves the enzymatic conversion of Thr, and Ser into dehydrated AA and the formation of thioether bonds with cysteine. The C-terminal lanthionine undergoes decarboxylation. This is followed by membrane translocation and cleavage of the modified precursor. The 2,3-didehydrobutyrine is determined to be the Z-isomer.

Functionally, lanthionine-containing peptide antibiotic (lantibiotic) active on Gram-positive bacteria. The bactericidal activity of lantibiotics is based on depolarization of energized bacterial cytoplasmic membranes, initiated by the formation of aqueous transmembrane pores. This is Lantibiotic epidermin (epiA) from Staphylococcus epidermidis.